Consider the following 407-residue polypeptide: Imidazolonepropionase (407 aa).

Fe(3+) contacts are provided by histidine 75 and histidine 77. Zn(2+) contacts are provided by histidine 75 and histidine 77. 4-imidazolone-5-propanoate is bound by residues arginine 84, tyrosine 142, and histidine 169. Residue tyrosine 142 coordinates N-formimidoyl-L-glutamate. Position 232 (histidine 232) interacts with Fe(3+). Residue histidine 232 participates in Zn(2+) binding. 4-imidazolone-5-propanoate is bound at residue glutamine 235. Residue aspartate 306 participates in Fe(3+) binding. Position 306 (aspartate 306) interacts with Zn(2+). Asparagine 308 and glycine 310 together coordinate N-formimidoyl-L-glutamate. A 4-imidazolone-5-propanoate-binding site is contributed by threonine 311.

The protein belongs to the metallo-dependent hydrolases superfamily. HutI family. Zn(2+) serves as cofactor. The cofactor is Fe(3+).

The protein localises to the cytoplasm. It catalyses the reaction 4-imidazolone-5-propanoate + H2O = N-formimidoyl-L-glutamate. The protein operates within amino-acid degradation; L-histidine degradation into L-glutamate; N-formimidoyl-L-glutamate from L-histidine: step 3/3. Its function is as follows. Catalyzes the hydrolytic cleavage of the carbon-nitrogen bond in imidazolone-5-propanoate to yield N-formimidoyl-L-glutamate. It is the third step in the universal histidine degradation pathway. This Rhodococcus jostii (strain RHA1) protein is Imidazolonepropionase.